The chain runs to 468 residues: MNLKLSAIESYFFHRSRLNLHSCFYVGIKLNELPKKSQLIAALKYTVIQHERLTCNVFYDELKKENFLQNILEPLKFCDLVEYRHDWDQLGETEINHIFQRYNFSYNENKPLWKILILPNQNQMLLLTDHVLMDGMSAIHVWETFMEGLQMQQPVEIDETIYSPSLNSSTEKIMSAPLYGDWPIPWNWHIVRQLVSRLHYWFPQTVVKNNRNLIQFANYSFPKDLLDDKPSDGTQKYKVKNTNHQWEFRLSPTHLNDILQECKANNTSLTSLLGALVCTSFEKIAAHEYTGSFLKIELPMNIRKPFERVLKLPSDDKLAVGNFIAVIEFNHKLHQNRGIWDIASQIQRAIRSSSEDKIIDKVNEVKLLEVISSQQYIEDKISLNNGPSSTFEVTNLGFQTFKDACNTSLPFYIVDATFNEPQGISSIFSLSVISTPGNGLHCCISYPNTLTKVLEPHWQYMKDYLNLY.

It is found in the endoplasmic reticulum. Its function is as follows. Confers resistance to the sphingolipid biosynthesis inhibitor drug myriocin (ISP-1). Inactivates ISP-1 by converting it into N-acetyl-myriocin. Cooperates with YPK1 in mediating resistance to myriocin. The sequence is that of N-acetyltransferase SLI1 (SLI1) from Saccharomyces cerevisiae (strain ATCC 204508 / S288c) (Baker's yeast).